The sequence spans 520 residues: Hydroxymethylglutaryl-CoA synthase, cytoplasmic (520 aa).

Ser-4 carries the phosphoserine modification. (3S)-3-hydroxy-3-methylglutaryl-CoA-binding residues include Asp-43 and Ala-44. A CoA-binding site is contributed by 44 to 46; the sequence is AGK. Lys-46 bears the N6-acetyllysine mark. Residue Glu-95 is the Proton donor/acceptor of the active site. Residues Cys-129, Asn-167, Thr-171, Ser-221, and His-264 each coordinate (3S)-3-hydroxy-3-methylglutaryl-CoA. The active-site Acyl-thioester intermediate is Cys-129. Asn-167 is a CoA binding site. CoA is bound at residue Ser-221. The active-site Proton donor/acceptor is His-264. CoA contacts are provided by Lys-269 and Lys-273. (3S)-3-hydroxy-3-methylglutaryl-CoA contacts are provided by Lys-273, Asn-343, and Ser-377. Position 273 is an N6-acetyllysine (Lys-273). A disordered region spans residues 486-520; the sequence is SNTATEHIPSPAKKVPRLPATAAESESAVISNGEH. Phosphoserine is present on residues Ser-495 and Ser-516.

This sequence belongs to the thiolase-like superfamily. HMG-CoA synthase family. Homodimer.

The protein resides in the cytoplasm. It catalyses the reaction acetoacetyl-CoA + acetyl-CoA + H2O = (3S)-3-hydroxy-3-methylglutaryl-CoA + CoA + H(+). The protein operates within metabolic intermediate biosynthesis; (R)-mevalonate biosynthesis; (R)-mevalonate from acetyl-CoA: step 2/3. In terms of biological role, this enzyme condenses acetyl-CoA with acetoacetyl-CoA to form HMG-CoA, which is converted by HMG-CoA reductase (HMGCR) into mevalonate, a precursor for cholesterol synthesis. This Cricetulus griseus (Chinese hamster) protein is Hydroxymethylglutaryl-CoA synthase, cytoplasmic.